Here is a 5537-residue protein sequence, read N- to C-terminus: MDSQKLAGEDKDSEPAADGPAASEDPSATESDLPNPHVGEVSVLSSGSPRLQETPQDCSGGPVRRCALCNCGEPSLHGQRELRRFELPFDWPRCPVVSPGGSPGPNEAVLPSEDLSQIGFPEGLTPAHLGEPGGSCWAHHWCAAWSAGVWGQEGPELCGVDKAIFSGISQRCSHCTRLGASIPCRSPGCPRLYHFPCATASGSFLSMKTLQLLCPEHSEGAAYLEEARCAVCEGPGELCDLFFCTSCGHHYHGACLDTALTARKRAGWQCPECKVCQACRKPGNDSKMLVCETCDKGYHTFCLKPPMEELPAHSWKCKACRVCRACGAGSAELNPNSEWFENYSLCHRCHKAQGGQTIRSVAEQHTPVCSRFSPPEPGDTPTDEPDALYVACQGQPKGGHVTSMQPKEPGPLQCEAKPLGKAGVQLEPQLEAPLNEEMPLLPPPEESPLSPPPEESPTSPPPEASRLSPPPEELPASPLPEALHLSRPLEESPLSPPPEESPLSPPPESSPFSPLEESPLSPPEESPPSPALETPLSPPPEASPLSPPFEESPLSPPPEELPTSPPPEASRLSPPPEESPMSPPPEESPMSPPPEASRLFPPFEESPLSPPPEESPLSPPPEASRLSPPPEDSPMSPPPEESPMSPPPEVSRLSPLPVVSRLSPPPEESPLSPPPEESPTSPPPEASRLSPPPEDSPTSPPPEDSPASPPPEDSLMSLPLEESPLLPLPEEPQLCPRSEGPHLSPRPEEPHLSPRPEEPHLSPQAEEPHLSPQPEEPCLCAVPEEPHLSPQAEGPHLSPQPEELHLSPQTEEPHLSPVPEEPCLSPQPEESHLSPQSEEPCLSPRPEESHLSPELEKPPLSPRPEKPPEEPGQCPAPEELPLFPPPGEPSLSPLLGEPALSEPGEPPLSPLPEELPLSPSGEPSLSPQLMPPDPLPPPLSPIITAAAPPALSPLGELEYPFGAKGDSDPESPLAAPILETPISPPPEANCTDPEPVPPMILPPSPGSPVGPASPILMEPLPPQCSPLLQHSLVPQNSPPSQCSPPALPLSVPSPLSPIGKVVGVSDEAELHEMETEKVSEPECPALEPSATSPLPSPMGDLSCPAPSPAPALDDFSGLGEDTAPLDGIDAPGSQPEPGQTPGSLASELKGSPVLLDPEELAPVTPMEVYPECKQTAGQGSPCEEQEEPRAPVAPTPPTLIKSDIVNEISNLSQGDASASFPGSEPLLGSPDPEGGGSLSMELGVSTDVSPARDEGSLRLCTDSLPETDDSLLCDAGTAISGGKAEGEKGRRRSSPARSRIKQGRSSSFPGRRRPRGGAHGGRGRGRARLKSTASSIETLVVADIDSSPSKEEEEEDDDTMQNTVVLFSNTDKFVLMQDMCVVCGSFGRGAEGHLLACSQCSQCYHPYCVNSKITKVMLLKGWRCVECIVCEVCGQASDPSRLLLCDDCDISYHTYCLDPPLLTVPKGGWKCKWCVSCMQCGAASPGFHCEWQNSYTHCGPCASLVTCPICHAPYVEEDLLIQCRHCERWMHAGCESLFTEDDVEQAADEGFDCVSCQPYVVKPVAPVAPPELVPMKVKEPEPQYFRFEGVWLTETGMALLRNLTMSPLHKRRQRRGRLGLPGEAGLEGSEPSDALGPDDKKDGDLDTDELLKGEGGVEHMECEIKLEGPVSPDVEPGKEETEESKKRKRKPYRPGIGGFMVRQRKSHTRTKKGPAAQAEVLSGDGQPDEVIPADLPAEGAVEQSLAEGDEKKKQQRRGRKKSKLEDMFPAYLQEAFFGKELLDLSRKALFAVGVGRPSFGLGTPKAKGDGGSERKELPTSQKGDDGPDIADEESRGLEGKADTPGPEDGGVKASPVPSDPEKPGTPGEGMLSSDLDRISTEELPKMESKDLQQLFKDVLGSEREQHLGCGTPGLEGSRTPLQRPFLQGGLPLGNLPSSSPMDSYPGLCQSPFLDSRERGGFFSPEPGEPDSPWTGSGGTTPSTPTTPTTEGEGDGLSYNQRSLQRWEKDEELGQLSTISPVLYANINFPNLKQDYPDWSSRCKQIMKLWRKVPAADKAPYLQKAKDNRAAHRINKVQKQAESQINKQTKVGDIARKTDRPALHLRIPPQPGALGSPPPAAAPTIFIGSPTTPAGLSTSADGFLKPPAGSVPGPDSPGELFLKLPPQVPAQVPSQDPFGLAPAYPLEPRFPTAPPTYPPYPSPTGAPAQPPMLGASSRPGAGQPGEFHTTPPGTPRHQPSTPDPFLKPRCPSLDNLAVPESPGVGGGKASEPLLSPPPFGESRKALEVKKEELGASSPSYGPPNLGFVDSPSSGTHLGGLELKTPDVFKAPLTPRASQVEPQSPGLGLRPQEPPPAQALAPSPPSHPDIFRPGSYTDPYAQPPLTPRPQPPPPESCCALPPRSLPSDPFSRVPASPQSQSSSQSPLTPRPLSAEAFCPSPVTPRFQSPDPYSRPPSRPQSRDPFAPLHKPPRPQPPEVAFKAGSLAHTSLGAGGFPAALPAGPAGELHAKVPSGQPPNFVRSPGTGAFVGTPSPMRFTFPQAVGEPSLKPPVPQPGLPPPHGINSHFGPGPTLGKPQSTNYTVATGNFHPSGSPLGPSSGSTGESYGLSPLRPPSVLPPPAPDGSLPYLSHGASQRSGITSPVEKREDPGTGMGSSLATAELPGTQDPGMSGLSQTELEKQRQRQRLRELLIRQQIQRNTLRQEKETAAAAAGAVGPPGSWGAEPSSPAFEQLSRGQTPFAGTQDKSSLVGLPPSKLSGPILGPGSFPSDDRLSRPPPPATPSSMDVNSRQLVGGSQAFYQRAPYPGSLPLQQQQQQLWQQQQATAATSMRFAMSARFPSTPGPELGRQALGSPLAGISTRLPGPGEPVPGPAGPAQFIELRHNVQKGLGPGGTPFPGQGPPQRPRFYPVSEDPHRLAPEGLRGLAVSGLPPQKPSAPPAPELNNSLHPTPHTKGPTLPTGLELVNRPPSSTELGRPNPLALEAGKLPCEDPELDDDFDAHKALEDDEELAHLGLGVDVAKGDDELGTLENLETNDPHLDDLLNGDEFDLLAYTDPELDTGDKKDIFNEHLRLVESANEKAEREALLRGVEPGPLGPEERPPPAADASEPRLASVLPEVKPKVEEGGRHPSPCQFTIATPKVEPAPAANSLGLGLKPGQSMMGSRDTRMGTGPFSSSGHTAEKASFGATGGPPAHLLTPSPLSGPGGSSLLEKFELESGALTLPGGPAASGDELDKMESSLVASELPLLIEDLLEHEKKELQKKQQLSAQLQPAQQQQQQQQQHSLLSAPGPAQAMSLPHEGSSPSLAGSQQQLSLGLAGARQPGLPQPLMPTQPPAHALQQRLAPSMAMVSNQGHMLSGQHGGQAGLVPQQSSQPVLSQKPMGTMPPSMCMKPQQLAMQQQLANSFFPDTDLDKFAAEDIIDPIAKAKMVALKGIKKVMAQGSIGVAPGMNRQQVSLLAQRLSGGPSSDLQNHVAAGSGQERSAGDPSQPRPNPPTFAQGVINEADQRQYEEWLFHTQQLLQMQLKVLEEQIGVHRKSRKALCAKQRTAKKAGREFPEADAEKLKLVTEQQSKIQKQLDQVRKQQKEHTNLMAEYRNKQQQQQQQQQQQQQQHSAVLALSPSQSPRLLTKLPGQLLPGHGLQPPQGPPGGQAGGLRLTPGGMALPGQPGGPFLNTALAQQQQQQHSGGAGSLAGPSGGFFPGNLALRSLGPDSRLLQERQLQLQQQRMQLAQKLQQQQQQQQQQQHLLGQVAIQQQQQQGPGVQTNQALGPKPQGLMPPSSHQGLLVQQLSPQPPQGPQGMLGPAQVAVLQQQHPGALGPQGPHRQVLMTQSRVLSSPQLAQQGQGLMGHRLVTAQQQQQQQQHQQQGSMAGLSHLQQSLMSHSGQPKLSAQPMGSLQQLQQQQQLQQQQQLQQQQQQQLQQQQQLQQQQLQQQQQQQQLQQQQQQQLQQQQQQLQQQQQQQQQQFQQQQQQQQMGLLNQSRTLLSPQQQQQQQVALGPGMPAKPLQHFSSPGALGPTLLLTGKEQNTVDPAVSSEATEGPSTHQGGPLAIGTTPESMATEPGEVKPSLSGDSQLLLVQPQPQPQPSSLQLQPPLRLPGQQQQQVSLLHTAGGGSHGQLGSGSSSEASSVPHLLAQPSVSLGDQPGSMTQNLLGPQQPMLERPMQNNTGPQPPKPGPVLQSGQGLPGVGIMPTVGQLRAQLQGVLAKNPQLRHLSPQQQQQLQALLMQRQLQQSQAVRQTPPYQEPGTQTSPLQGLLGCQPQLGGFPGPQTGPLQELGAGPRPQGPPRLPAPPGALSTGPVLGPVHPTPPPSSPQEPKRPSQLPSPSSQLPTEAQLPPTHPGTPKPQGPTLEPPPGRVSPAAAQLADTLFSKGLGPWDPPDNLAETQKPEQSSLVPGHLDQVNGQVVPEASQLSIKQEPREEPCALGAQSVKREANGEPIGAPGTSNHLLLAGPRSEAGHLLLQKLLRAKNVQLSTGRGSEGLRAEINGHIDSKLAGLEQKLQGTPSNKEDAAARKPLTPKPKRVQKASDRLVSSRKKLRKEDGVRASEALLKQLKQELSLLPLTEPAITANFSLFAPFGSGCPVNGQSQLRGAFGSGALPTGPDYYSQLLTKNNLSNPPTPPSSLPPTPPPSVQQKMVNGVTPSEELGEHPKDAASARDSERALRDTSEVKSLDLLAALPTPPHNQTEDVRMESDEDSDSPDSIVPASSPESILGEEAPRFPHLGSGRWEQEDRALSPVIPLIPRASIPVFPDTKPYGALGLEVPGKLPVTTWEKGKGSEVSVMLTVSAAAAKNLNGVMVAVAELLSMKIPNSYEVLFPESPARAGTEPKKGEAEGPGGKEKGLEGKSPDTGPDWLKQFDAVLPGYTLKSQLDILSLLKQESPAPEPPTQHSYTYNVSNLDVRQLSAPPPEEPSPPPSPLAPSPASPPTEPLVELPTEPLAEPPVPSPLPLASSPESARPKPRARPPEEGEDSRPPRLKKWKGVRWKRLRLLLTIQKGSGRQEDEREVAEFMEQLGTALRPDKVPRDMRRCCFCHEEGDGATDGPARLLNLDLDLWVHLNCALWSTEVYETQGGALMNVEVALHRGLLTKCSLCQRTGATSSCNRMRCPNVYHFACAIRAKCMFFKDKTMLCPMHKIKGPCEQELSSFAVFRRVYIERDEVKQIASIIQRGERLHMFRVGGLVFHAIGQLLPHQMADFHSATALYPVGYEATRIYWSLRTNNRRCCYRCSIGENNGRPEFVIKVIEQGLEDLVFTDASPQAVWNRIIEPVAAMRKEADMLRLFPEYLKGEELFGLTVHAVLRIAESLPGVESCQNYLFRYGRHPLMELPLMINPTGCARSEPKILTHYKRPHTLNSTSMSKAYQSTFTGETNTPYSKQFVHSKSSQYRRLRTEWKNNVYLARSRIQGLGLYAAKDLEKHTMVIEYIGTIIRNEVANRREKIYEEQNRGIYMFRINNEHVIDATLTGGPARYINHSCAPNCVAEVVTFDKEDKIIIISSRRIPKGEELTYDYQFDFEDDQHKIPCHCGAWNCRKWMN.

The interval 1 to 60 is disordered; sequence MDSQKLAGEDKDSEPAADGPAASEDPSATESDLPNPHVGEVSVLSSGSPRLQETPQDCSG. Position 27 is a phosphoserine (Ser27). Polar residues predominate over residues 43-57; sequence VLSSGSPRLQETPQD. Residues 104–149 form a C2HC pre-PHD-type 1; degenerate zinc finger; the sequence is GPNEAVLPSEDLSQIGFPEGLTPAHLGEPGGSCWAHHWCAAWSAGV. 3 consecutive PHD-type zinc fingers follow at residues 170-218, 226-276, and 273-323; these read QRCS…PEHS, EARC…CKVC, and CKVC…CRVC. An RING-type 1; atypical zinc finger spans residues 229–274; that stretch reads CAVCEGPGELCDLFFCTSCGHHYHGACLDTALTARKRAGWQCPECK. Residues 276–321 form an RING-type 2; degenerate zinc finger; that stretch reads CQACRKPGNDSKMLVCETCDKGYHTFCLKPPMEELPAHSWKCKACR. Disordered regions lie at residues 368–387, 393–416, 436–1331, and 1340–1359; these read VCSR…EPDA, QGQP…QCEA, EEMP…RLKS, and VVAD…DDDT. Positions 439–668 are 15 X 5 AA repeats of S/P-P-P-E/P-E/A; the sequence is PLLPPPEESP…VSRLSPPPEE (230 aa). Residues 440 to 473 show a composition bias toward pro residues; the sequence is LLPPPEESPLSPPPEESPTSPPPEASRLSPPPEE. A run of 3 repeats spans residues 442–446, 460–464, and 469–473. The segment covering 474 to 483 has biased composition (low complexity); that stretch reads LPASPLPEAL. Pro residues predominate over residues 494–509; the sequence is LSPPPEESPLSPPPES. Repeat copies occupy residues 496 to 500 and 504 to 508. Residues 510–519 are compositionally biased toward low complexity; sequence SPFSPLEESP. Pro residues-rich tracts occupy residues 520–547 and 554–595; these read LSPP…PLSP and LSPP…PPPE. A run of 5 repeats spans residues 521 to 525, 555 to 559, 564 to 568, 573 to 577, and 582 to 586. The segment covering 596–607 has biased composition (low complexity); the sequence is ASRLFPPFEESP. Pro residues predominate over residues 608–649; the sequence is LSPPPEESPLSPPPEASRLSPPPEDSPMSPPPEESPMSPPPE. Repeat copies occupy residues 609–613, 618–622, 627–631, and 645–649. Residues 650–662 show a composition bias toward low complexity; the sequence is VSRLSPLPVVSRL. Repeat 15 spans residues 663–667; sequence SPPPE. The span at 663–712 shows a compositional bias: pro residues; the sequence is SPPPEESPLSPPPEESPTSPPPEASRLSPPPEDSPTSPPPEDSPASPPPE. Over residues 713-725 the composition is skewed to low complexity; the sequence is DSLMSLPLEESPL. Phosphoserine is present on Ser744. Composition is skewed to basic and acidic residues over residues 745-760 and 845-869; these read PRPE…EEPH and RPEE…KPPE. 2 stretches are compositionally biased toward low complexity: residues 889 to 903 and 911 to 928; these read PSLS…LSEP and LPEE…LSPQ. Positions 929-940 are enriched in pro residues; sequence LMPPDPLPPPLS. Low complexity predominate over residues 941–954; that stretch reads PIITAAAPPALSPL. The segment covering 994-1008 has biased composition (pro residues); it reads EPVPPMILPPSPGSP. Residues 1048 to 1057 show a composition bias toward low complexity; the sequence is PLSVPSPLSP. The segment covering 1068–1080 has biased composition (basic and acidic residues); it reads AELHEMETEKVSE. Phosphoserine is present on Ser1151. Thr1195 carries the post-translational modification Phosphothreonine. A compositionally biased stretch (polar residues) spans 1207 to 1216; sequence EISNLSQGDA. Position 1249 is a phosphoserine (Ser1249). At Thr1267 the chain carries Phosphothreonine. The residue at position 1270 (Ser1270) is a Phosphoserine. Composition is skewed to basic residues over residues 1289–1302 and 1310–1329; these read GRRR…RIKQ and GRRR…RARL. 3 consecutive PHD-type zinc fingers follow at residues 1377 to 1430, 1427 to 1477, and 1504 to 1559; these read QDMC…CIVC, CIVC…CVSC, and LVTC…CQPY. The RING-type 3; atypical zinc finger occupies 1507–1557; sequence CPICHAPYVEEDLLIQCRHCERWMHAGCESLFTEDDVEQAADEGFDCVSCQ. A Phosphoserine modification is found at Ser1606. Disordered regions lie at residues 1610–1767, 1793–1889, 1904–2002, and 2165–2683; these read KRRQ…LEDM, GVGR…MESK, EQHL…NQRS, and PQVP…QRQR. Residues 1637 to 1666 show a composition bias toward basic and acidic residues; that stretch reads PDDKKDGDLDTDELLKGEGGVEHMECEIKL. Phosphoserine is present on Ser1671. Residues 1675 to 1685 show a composition bias toward basic and acidic residues; it reads EPGKEETEESK. Basic residues-rich tracts occupy residues 1702-1712 and 1753-1762; these read RQRKSHTRTKK and KQQRRGRKKS. Composition is skewed to basic and acidic residues over residues 1806–1825 and 1832–1841; these read AKGD…KGDD and EESRGLEGKA. Residues Ser1820 and Ser1834 each carry the phosphoserine modification. Phosphothreonine is present on residues Thr1843 and Thr1865. Residues 1874 to 1889 show a composition bias toward basic and acidic residues; the sequence is DLDRISTEELPKMESK. The span at 1979-1990 shows a compositional bias: low complexity; sequence TTPSTPTTPTTE. The span at 2190–2209 shows a compositional bias: pro residues; the sequence is PTAPPTYPPYPSPTGAPAQP. At Ser2239 the chain carries Phosphoserine. Thr2240 carries the phosphothreonine modification. At Lys2246 the chain carries N6-acetyllysine. Phosphoserine is present on residues Ser2260 and Ser2274. The segment covering 2280-2292 has biased composition (basic and acidic residues); that stretch reads ESRKALEVKKEEL. Residues Ser2309, Ser2311, and Ser2342 each carry the phosphoserine modification. Composition is skewed to pro residues over residues 2350 to 2365 and 2379 to 2393; these read QEPP…PPSH and AQPP…PPPE. Composition is skewed to low complexity over residues 2409–2431 and 2494–2505; these read SRVP…RPLS and FPAALPAGPAGE. Arg2535 is modified (asymmetric dimethylarginine). Residues 2547 to 2560 are compositionally biased toward pro residues; sequence LKPPVPQPGLPPPH. Over residues 2574 to 2584 the composition is skewed to polar residues; the sequence is KPQSTNYTVAT. Residues 2589-2609 show a composition bias toward low complexity; sequence PSGSPLGPSSGSTGESYGLSP. Pro residues predominate over residues 2610–2621; the sequence is LRPPSVLPPPAP. Residue Ser2640 is modified to Phosphoserine. Positions 2669 to 2707 form a coiled coil; sequence MSGLSQTELEKQRQRQRLRELLIRQQIQRNTLRQEKETA. Residues 2686 to 2690 carry the LXXLL motif 1 motif; that stretch reads LRELL. 2 disordered regions span residues 2697 to 2814 and 2835 to 2996; these read RNTL…QQQQ and ARFP…LDDD. Positions 2707-2722 are enriched in low complexity; sequence AAAAAGAVGPPGSWGA. 2 stretches are compositionally biased toward polar residues: residues 2733-2746 and 2781-2790; these read SRGQ…QDKS and PSSMDVNSRQ. Arg2836 is subject to Asymmetric dimethylarginine. Over residues 2931-2940 the composition is skewed to pro residues; it reads PQKPSAPPAP. The LXXLL motif 2 motif lies at 3038–3042; that stretch reads LDDLL. A disordered region spans residues 3078–3110; sequence EKAEREALLRGVEPGPLGPEERPPPAADASEPR. An N6-acetyllysine modification is found at Lys3079. Ser3130 carries the post-translational modification Phosphoserine. Disordered regions lie at residues 3147–3209 and 3263–3339; these read ANSL…GSSL and KQQL…AHAL. Phosphothreonine is present on Thr3197. 3 stretches are compositionally biased toward low complexity: residues 3198–3209, 3263–3289, and 3301–3320; these read PSPLSGPGGSSL, KQQL…LSAP, and GSSP…LAGA. Ser3199 is subject to Phosphoserine. A coiled-coil region spans residues 3249 to 3282; the sequence is IEDLLEHEKKELQKKQQLSAQLQPAQQQQQQQQQ. Over residues 3325–3334 the composition is skewed to pro residues; that stretch reads LPQPLMPTQP. Lys3433 bears the N6-acetyllysine mark. Disordered stretches follow at residues 3462-3499 and 3596-3673; these read LSGG…TFAQ and RNKQ…GPFL. Residues 3562 to 3614 are a coiled coil; the sequence is EKLKLVTEQQSKIQKQLDQVRKQQKEHTNLMAEYRNKQQQQQQQQQQQQQQHS. Low complexity-rich tracts occupy residues 3599–3612 and 3631–3643; these read QQQQ…QQQQ and LPGQ…GLQP. Residues 3714–3750 adopt a coiled-coil conformation; sequence RLLQERQLQLQQQRMQLAQKLQQQQQQQQQQQHLLGQ. Asymmetric dimethylarginine is present on Arg3727. Positions 3758-3802 are disordered; that stretch reads QQGPGVQTNQALGPKPQGLMPPSSHQGLLVQQLSPQPPQGPQGML. Residues 3897-3975 are a coiled coil; sequence LQQLQQQQQL…FQQQQQQQQM (79 aa). A disordered region spans residues 3984–4191; it reads LLSPQQQQQQ…GQGLPGVGIM (208 aa). The segment covering 4012 to 4023 has biased composition (low complexity); the sequence is PGALGPTLLLTG. The span at 4024–4045 shows a compositional bias: polar residues; it reads KEQNTVDPAVSSEATEGPSTHQ. Over residues 4073 to 4108 the composition is skewed to low complexity; that stretch reads SQLLLVQPQPQPQPSSLQLQPPLRLPGQQQQQVSLL. The span at 4111–4120 shows a compositional bias: gly residues; sequence AGGGSHGQLG. A compositionally biased stretch (polar residues) spans 4137-4154; it reads PSVSLGDQPGSMTQNLLG. Arg4198 is modified (asymmetric dimethylarginine). Ser4215 carries the post-translational modification Phosphoserine. The LXXLL motif 3 motif lies at 4222-4226; the sequence is LQALL. Disordered regions lie at residues 4233–4398 and 4410–4452; these read QSQA…VPGH and ASQL…LLLA. Residues 4237–4251 are compositionally biased toward polar residues; it reads VRQTPPYQEPGTQTS. Low complexity predominate over residues 4252-4282; the sequence is PLQGLLGCQPQLGGFPGPQTGPLQELGAGPR. Residues 4253–4257 carry the LXXLL motif 4 motif; that stretch reads LQGLL. Positions 4283–4293 are enriched in pro residues; the sequence is PQGPPRLPAPP. Low complexity-rich tracts occupy residues 4294–4305 and 4320–4331; these read GALSTGPVLGPV and PSQLPSPSSQLP. The segment covering 4338-4357 has biased composition (pro residues); it reads PTHPGTPKPQGPTLEPPPGR. Position 4359 is a phosphoserine (Ser4359). Residues 4463–4467 carry the LXXLL motif 5 motif; the sequence is LQKLL. Lys4465 is modified (N6-acetyllysine). Disordered stretches follow at residues 4503–4544 and 4613–4727; these read QGTP…KEDG and KNNL…HLGS. The segment covering 4619 to 4633 has biased composition (pro residues); that stretch reads PPTPPSSLPPTPPPS. Residues 4648–4673 are compositionally biased toward basic and acidic residues; the sequence is LGEHPKDAASARDSERALRDTSEVKS. Ser4738 is subject to Phosphoserine. A Glycyl lysine isopeptide (Lys-Gly) (interchain with G-Cter in SUMO2) cross-link involves residue Lys4756. N6-acetyllysine is present on Lys4776. Ser4822 and Ser4849 each carry phosphoserine. A disordered region spans residues 4822–4857; that stretch reads SPARAGTEPKKGEAEGPGGKEKGLEGKSPDTGPDWL. The span at 4828–4849 shows a compositional bias: basic and acidic residues; sequence TEPKKGEAEGPGGKEKGLEGKS. Residue Lys4880 forms a Glycyl lysine isopeptide (Lys-Gly) (interchain with G-Cter in SUMO2) linkage. Positions 4905-4980 are disordered; sequence QLSAPPPEEP…GEDSRPPRLK (76 aa). Pro residues predominate over residues 4908–4931; the sequence is APPPEEPSPPPSPLAPSPASPPTE. The span at 4932 to 4941 shows a compositional bias: low complexity; that stretch reads PLVELPTEPL. Over residues 4966 to 4976 the composition is skewed to basic and acidic residues; it reads RPPEEGEDSRP. The short motif at 4990–4994 is the LXXLL motif 6 element; it reads LRLLL. The C2HC pre-PHD-type 2 zinc-finger motif lies at 5029–5069; the sequence is MRRCCFCHEEGDGATDGPARLLNLDLDLWVHLNCALWSTEV. A PHD-type 7 zinc finger spans residues 5090–5137; it reads TKCSLCQRTGATSSCNRMRCPNVYHFACAIRAKCMFFKDKTMLCPMHK. The region spanning 5175–5235 is the FYR N-terminal domain; it reads LHMFRVGGLV…CCYRCSIGEN (61 aa). The region spanning 5236 to 5321 is the FYR C-terminal domain; the sequence is NGRPEFVIKV…ESCQNYLFRY (86 aa). The short motif at 5337–5342 is the WDR5 interaction motif (WIN) element; it reads GCARSE. An SET domain is found at 5397 to 5513; sequence NNVYLARSRI…KGEELTYDYQ (117 aa). S-adenosyl-L-methionine contacts are provided by residues Tyr5451 and 5474-5475; that span reads NH. Positions 5477, 5525, 5527, and 5532 each coordinate Zn(2+). A Post-SET domain is found at 5521–5537; it reads HKIPCHCGAWNCRKWMN.

This sequence belongs to the class V-like SAM-binding methyltransferase superfamily. Histone-lysine methyltransferase family. TRX/MLL subfamily. In terms of assembly, component of the MLL2 complex (also named ASCOM complex), at least composed of catalytic subunit KMT2D/MLL2, ASH2L, RBBP5, WDR5, NCOA6, DPY30, KDM6A, PAXIP1/PTIP, PAGR1 and alpha- and beta-tubulin. Forms a core complex with the evolutionary conserved subcomplex WRAD composed of WDR5, RBBP5, ASH2L/ASH2 and DPY30 subunits; WRAD differentially stimulates the methyltransferase activity. Interacts with ESR1; interaction is direct. Interacts (via WIN motif) with WDR5. As to expression, expressed in most adult tissues, including a variety of hematoipoietic cells, with the exception of the liver.

The protein localises to the nucleus. The catalysed reaction is L-lysyl(4)-[histone H3] + S-adenosyl-L-methionine = N(6)-methyl-L-lysyl(4)-[histone H3] + S-adenosyl-L-homocysteine + H(+). In terms of biological role, histone methyltransferase that catalyzes methyl group transfer from S-adenosyl-L-methionine to the epsilon-amino group of 'Lys-4' of histone H3 (H3K4). Part of chromatin remodeling machinery predominantly forms H3K4me1 methylation marks at active chromatin sites where transcription and DNA repair take place. Acts as a coactivator for estrogen receptor by being recruited by ESR1, thereby activating transcription. The chain is Histone-lysine N-methyltransferase 2D (KMT2D) from Homo sapiens (Human).